A 272-amino-acid chain; its full sequence is Eukaryotic translation initiation factor 3 subunit G (272 aa).

2 disordered regions span residues 1-28 (MPAL…PTEI) and 157-188 (APTT…GRDD). In terms of domain architecture, RRM spans 190–268 (TAIRISNLSE…LILNVEWSKP (79 aa)).

It belongs to the eIF-3 subunit G family. In terms of assembly, component of the eukaryotic translation initiation factor 3 (eIF-3) complex.

It is found in the cytoplasm. Its function is as follows. RNA-binding component of the eukaryotic translation initiation factor 3 (eIF-3) complex, which is involved in protein synthesis of a specialized repertoire of mRNAs and, together with other initiation factors, stimulates binding of mRNA and methionyl-tRNAi to the 40S ribosome. The eIF-3 complex specifically targets and initiates translation of a subset of mRNAs involved in cell proliferation. This subunit can bind 18S rRNA. The chain is Eukaryotic translation initiation factor 3 subunit G from Aedes aegypti (Yellowfever mosquito).